Consider the following 266-residue polypeptide: Killer cell lectin-like receptor 3 (266 aa).

The Cytoplasmic segment spans residues M1 to K48. Residues A49–F69 form a helical; Signal-anchor for type II membrane protein membrane-spanning segment. Residues Q70–D266 are Extracellular-facing. 4 N-linked (GlcNAc...) asparagine glycosylation sites follow: N79, N87, N104, and N113. Residues W147 to S151 form an involved in dimerization region. C149 and C154 are oxidised to a cystine. Residues Y150–G258 enclose the C-type lectin domain. N160 is a glycosylation site (N-linked (GlcNAc...) asparagine). Implicated in MHC class I binding regions lie at residues N160–T162, I195–P196, K207–K208, M224–S233, and S240–E245. Intrachain disulfides connect C167–C255, C171–C257, and C236–C249.

In terms of assembly, homodimer; disulfide-linked.

The protein resides in the membrane. Its function is as follows. Receptor on natural killer (NK) cells for class I MHC. This Mus musculus (Mouse) protein is Killer cell lectin-like receptor 3 (Klra3).